The chain runs to 1000 residues: Kinesin-like protein CIN8 (1000 aa).

A compositionally biased stretch (polar residues) spans 1 to 26; sequence MPAENQNTGQDRSSNSISKNGNSQVG. Positions 1 to 28 are disordered; sequence MPAENQNTGQDRSSNSISKNGNSQVGCH. Positions 36 to 477 constitute a Kinesin motor domain; sequence NITVAVRCRG…LEYASKAKNI (442 aa). Residue 128–135 participates in ATP binding; that stretch reads GMTSTGKT. The segment covering 220–242 has biased composition (low complexity); the sequence is ANNTTSNSASSSRSNSRNSSPRS. Disordered regions lie at residues 220-248 and 260-312; these read ANNT…DLTP and KSLP…PNDQ. Residues 261 to 276 are compositionally biased toward polar residues; it reads SLPNTIKQQYQQQQAV. Positions 277-301 are enriched in low complexity; that stretch reads NSRNNSSSNSGSTTNNASSNTNTNN. Residues 302–312 show a composition bias toward polar residues; the sequence is GQRSSMAPNDQ. Coiled-coil stretches lie at residues 518 to 615 and 860 to 904; these read MSQD…MALH and ISVM…IKNS. Residues 970-1000 are disordered; that stretch reads VISPKKHAIEDENKSSENVDNEGSRKMLKIE. The residue at position 972 (Ser-972) is a Phosphoserine. The span at 976–1000 shows a compositional bias: basic and acidic residues; sequence HAIEDENKSSENVDNEGSRKMLKIE.

Belongs to the TRAFAC class myosin-kinesin ATPase superfamily. Kinesin family. BimC subfamily.

It localises to the cytoplasm. The protein resides in the cytoskeleton. The protein localises to the spindle. It is found in the mitochondrion. Elongates the mitotic spindle by interacting with spindle microtubules to generate an outward force pushing spindle poles apart. Following spindle assembly, CIN8 and KIP1 apparently act to oppose a force, possibly generated by KAR3, that draws separated poles back together. This is Kinesin-like protein CIN8 (CIN8) from Saccharomyces cerevisiae (strain ATCC 204508 / S288c) (Baker's yeast).